The following is a 170-amino-acid chain: uncharacterized protein (170 aa).

This is an uncharacterized protein from Acidianus convivator (ATV).